Here is a 621-residue protein sequence, read N- to C-terminus: 1-deoxy-D-xylulose-5-phosphate synthase (621 aa).

Thiamine diphosphate contacts are provided by residues His80 and 121-123; that span reads GHS. Asp152 contacts Mg(2+). Residues 153 to 154, Asn181, Tyr288, and Glu370 each bind thiamine diphosphate; that span reads GA. Mg(2+) is bound at residue Asn181.

The protein belongs to the transketolase family. DXPS subfamily. Homodimer. Mg(2+) is required as a cofactor. Thiamine diphosphate serves as cofactor.

The catalysed reaction is D-glyceraldehyde 3-phosphate + pyruvate + H(+) = 1-deoxy-D-xylulose 5-phosphate + CO2. Its pathway is metabolic intermediate biosynthesis; 1-deoxy-D-xylulose 5-phosphate biosynthesis; 1-deoxy-D-xylulose 5-phosphate from D-glyceraldehyde 3-phosphate and pyruvate: step 1/1. Its function is as follows. Catalyzes the acyloin condensation reaction between C atoms 2 and 3 of pyruvate and glyceraldehyde 3-phosphate to yield 1-deoxy-D-xylulose-5-phosphate (DXP). In Edwardsiella ictaluri (strain 93-146), this protein is 1-deoxy-D-xylulose-5-phosphate synthase.